We begin with the raw amino-acid sequence, 395 residues long: Tryptophan synthase beta chain (395 aa).

N6-(pyridoxal phosphate)lysine is present on K86.

It belongs to the TrpB family. In terms of assembly, tetramer of two alpha and two beta chains. Pyridoxal 5'-phosphate is required as a cofactor.

The enzyme catalyses (1S,2R)-1-C-(indol-3-yl)glycerol 3-phosphate + L-serine = D-glyceraldehyde 3-phosphate + L-tryptophan + H2O. It participates in amino-acid biosynthesis; L-tryptophan biosynthesis; L-tryptophan from chorismate: step 5/5. Functionally, the beta subunit is responsible for the synthesis of L-tryptophan from indole and L-serine. The polypeptide is Tryptophan synthase beta chain (Psychromonas ingrahamii (strain DSM 17664 / CCUG 51855 / 37)).